The chain runs to 149 residues: Large ribosomal subunit protein bL9 (149 aa).

The protein belongs to the bacterial ribosomal protein bL9 family.

Its function is as follows. Binds to the 23S rRNA. The sequence is that of Large ribosomal subunit protein bL9 from Geobacillus sp. (strain WCH70).